Here is a 382-residue protein sequence, read N- to C-terminus: Histidinol-phosphate aminotransferase (382 aa).

Residue lysine 215 is modified to N6-(pyridoxal phosphate)lysine. Positions 363 to 382 (NIDNQNKTYSQTSSIRKGTI) are disordered.

The protein belongs to the class-II pyridoxal-phosphate-dependent aminotransferase family. Histidinol-phosphate aminotransferase subfamily. Homodimer. It depends on pyridoxal 5'-phosphate as a cofactor.

The catalysed reaction is L-histidinol phosphate + 2-oxoglutarate = 3-(imidazol-4-yl)-2-oxopropyl phosphate + L-glutamate. Its pathway is amino-acid biosynthesis; L-histidine biosynthesis; L-histidine from 5-phospho-alpha-D-ribose 1-diphosphate: step 7/9. The sequence is that of Histidinol-phosphate aminotransferase from Yersinia pestis bv. Antiqua (strain Antiqua).